Consider the following 1106-residue polypeptide: Protein kinase C (1106 aa).

Residues 1 to 67 enclose the REM-1 1 domain; it reads MDGDDLIASV…MRELQLRQMK (67 aa). A disordered region spans residues 65–138; the sequence is QMKQEGASPT…PRPFAPVPKA (74 aa). Pro residues predominate over residues 79 to 93; it reads PPNPDGSAPVPPPKD. The region spanning 149-226 is the REM-1 2 domain; the sequence is KYDTPYLGPK…LKRYEDLHVD (78 aa). One can recognise a C2 domain in the interval 232–350; sequence APDDESLSTP…MRRKKIESEF (119 aa). Residues 361–370 show a composition bias toward basic and acidic residues; that stretch reads MEHGAAHGRQ. The disordered stretch occupies residues 361–400; that stretch reads MEHGAAHGRQDAGGAPGSSNRPPSGGHSGGPGQGYAGGAP. Gly residues predominate over residues 386 to 400; it reads GHSGGPGQGYAGGAP. Phorbol-ester/DAG-type zinc fingers lie at residues 460-508 and 528-578; these read GHKF…VTKC and PHRF…PDFC. Composition is skewed to polar residues over residues 600–609 and 658–668; these read KSASVSSGLS and YIPPQSPTAAQ. Disordered regions lie at residues 600–625 and 658–719; these read KSASVSSGLSGRTLRPGGPPQAPQDN and YIPP…HAHY. Residues 683 to 693 show a composition bias toward low complexity; that stretch reads AAAAAAAAAAA. Residues 781–1040 form the Protein kinase domain; sequence FNFLAVLGKG…AQEVMSHAFF (260 aa). Residues 787 to 795 and lysine 810 each bind ATP; that span reads LGKGNFGKV. Aspartate 906 acts as the Proton acceptor in catalysis. Residues 1041–1106 form the AGC-kinase C-terminal domain; sequence RNINWDDIYH…RGFSYTADFA (66 aa). Threonine 1082 carries the post-translational modification Phosphothreonine. The residue at position 1100 (serine 1100) is a Phosphoserine. Phosphotyrosine is present on tyrosine 1101.

This sequence belongs to the protein kinase superfamily. AGC Ser/Thr protein kinase family. PKC subfamily. As to quaternary structure, interacts with hsp90.

The catalysed reaction is L-seryl-[protein] + ATP = O-phospho-L-seryl-[protein] + ADP + H(+). The enzyme catalyses L-threonyl-[protein] + ATP = O-phospho-L-threonyl-[protein] + ADP + H(+). Protein kinase C; part of cell wall integrity (CWI) signaling pathway composed of pkcA, the bck1-mkk2-mpka MAPK cascade and the downstream rlmA transcription regulator. The CWI signaling pathway regulates cell wall integrity and pyomelanin formation. CWI also controls oxidative stress response, gliotoxin production, iron adaptation and asexual development. Finally, CWI is constitutively required for A.fumigatus to cope with the temperature increase found in the mammalian lung environment, during infection. Modulates the expression of fumiquinazoline cluster during conidiogenesis. This chain is Protein kinase C, found in Aspergillus fumigatus (strain ATCC MYA-4609 / CBS 101355 / FGSC A1100 / Af293) (Neosartorya fumigata).